The chain runs to 257 residues: Hydroxyacylglutathione hydrolase (257 aa).

Positions 58, 60, 62, 63, 116, 135, and 173 each coordinate Zn(2+).

It belongs to the metallo-beta-lactamase superfamily. Glyoxalase II family. In terms of assembly, monomer. Zn(2+) is required as a cofactor.

The enzyme catalyses an S-(2-hydroxyacyl)glutathione + H2O = a 2-hydroxy carboxylate + glutathione + H(+). It functions in the pathway secondary metabolite metabolism; methylglyoxal degradation; (R)-lactate from methylglyoxal: step 2/2. In terms of biological role, thiolesterase that catalyzes the hydrolysis of S-D-lactoyl-glutathione to form glutathione and D-lactic acid. The chain is Hydroxyacylglutathione hydrolase from Brucella melitensis biotype 1 (strain ATCC 23456 / CCUG 17765 / NCTC 10094 / 16M).